A 73-amino-acid polypeptide reads, in one-letter code: Potassium channel toxin alpha-KTx 27.4 (73 aa).

The first 26 residues, 1 to 26 (MKFLFLTLVLLYFTAILVFIVFPSYA), serve as a signal peptide directing secretion.

This sequence belongs to the short scorpion toxin superfamily. Potassium channel inhibitor family. Alpha-KTx 27 subfamily. In terms of processing, contains 4 disulfide bonds. In terms of tissue distribution, expressed by the venom gland.

It localises to the secreted. The sequence is that of Potassium channel toxin alpha-KTx 27.4 from Mesobuthus gibbosus (Mediterranean checkered scorpion).